We begin with the raw amino-acid sequence, 320 residues long: Pyrroline-5-carboxylate reductase 2 (320 aa).

S2 carries the N-acetylserine modification. Residues 6-11 (IGAGQL) and S34 contribute to the NADP(+) site. NADPH contacts are provided by A8, Q10, L11, S34, E36, N56, V70, K71, and A97. NADP(+) contacts are provided by residues N56, 69 to 72 (AVKP), and 95 to 97 (CAA). Residue E164 participates in L-proline binding. N230 provides a ligand contact to NADPH. 2 residues coordinate L-proline: A237 and T238. Low complexity predominate over residues 296–305 (TVSTLTPSSP). The segment at 296–320 (TVSTLTPSSPGKLLTRSLALGGKKD) is disordered. S304 carries the phosphoserine modification.

Belongs to the pyrroline-5-carboxylate reductase family. In terms of assembly, homodecamer; composed of 5 homodimers. Interacts with LTO1.

Its subcellular location is the cytoplasm. The protein resides in the mitochondrion. The catalysed reaction is L-proline + NADP(+) = (S)-1-pyrroline-5-carboxylate + NADPH + 2 H(+). It carries out the reaction L-proline + NAD(+) = (S)-1-pyrroline-5-carboxylate + NADH + 2 H(+). It functions in the pathway amino-acid biosynthesis; L-proline biosynthesis; L-proline from L-glutamate 5-semialdehyde: step 1/1. Its function is as follows. Oxidoreductase that catalyzes the last step in proline biosynthesis, which corresponds to the reduction of pyrroline-5-carboxylate to L-proline using NAD(P)H. At physiologic concentrations, has higher specific activity in the presence of NADH. Involved in cellular response to oxidative stress. In some cell types, such as erythrocytes, its primary function may be the generation of NADP(+). The chain is Pyrroline-5-carboxylate reductase 2 (PYCR2) from Pongo abelii (Sumatran orangutan).